Consider the following 133-residue polypeptide: Stage III sporulation protein AD (133 aa).

3 helical membrane-spanning segments follow: residues 2 to 22 (QIDIVQIVGLGLIATFLSLIV), 29 to 49 (FAFLIVVFAGCAIFLYLVDQI), and 108 to 128 (ILILVMAVPILTVIIETILGL).

It is found in the cell membrane. The protein is Stage III sporulation protein AD (spoIIIAD) of Bacillus subtilis (strain 168).